The following is a 156-amino-acid chain: Endoribonuclease YbeY (156 aa).

Zn(2+) contacts are provided by His122, His126, and His132.

This sequence belongs to the endoribonuclease YbeY family. The cofactor is Zn(2+).

Its subcellular location is the cytoplasm. Functionally, single strand-specific metallo-endoribonuclease involved in late-stage 70S ribosome quality control and in maturation of the 3' terminus of the 16S rRNA. The chain is Endoribonuclease YbeY from Symbiobacterium thermophilum (strain DSM 24528 / JCM 14929 / IAM 14863 / T).